Consider the following 178-residue polypeptide: Crossover junction endodeoxyribonuclease RuvC (178 aa).

Residues aspartate 11, glutamate 71, and aspartate 143 contribute to the active site. Residues aspartate 11, glutamate 71, and aspartate 143 each contribute to the Mg(2+) site.

The protein belongs to the RuvC family. As to quaternary structure, homodimer which binds Holliday junction (HJ) DNA. The HJ becomes 2-fold symmetrical on binding to RuvC with unstacked arms; it has a different conformation from HJ DNA in complex with RuvA. In the full resolvosome a probable DNA-RuvA(4)-RuvB(12)-RuvC(2) complex forms which resolves the HJ. It depends on Mg(2+) as a cofactor.

The protein resides in the cytoplasm. The catalysed reaction is Endonucleolytic cleavage at a junction such as a reciprocal single-stranded crossover between two homologous DNA duplexes (Holliday junction).. Its function is as follows. The RuvA-RuvB-RuvC complex processes Holliday junction (HJ) DNA during genetic recombination and DNA repair. Endonuclease that resolves HJ intermediates. Cleaves cruciform DNA by making single-stranded nicks across the HJ at symmetrical positions within the homologous arms, yielding a 5'-phosphate and a 3'-hydroxyl group; requires a central core of homology in the junction. The consensus cleavage sequence is 5'-(A/T)TT(C/G)-3'. Cleavage occurs on the 3'-side of the TT dinucleotide at the point of strand exchange. HJ branch migration catalyzed by RuvA-RuvB allows RuvC to scan DNA until it finds its consensus sequence, where it cleaves and resolves the cruciform DNA. The protein is Crossover junction endodeoxyribonuclease RuvC of Neisseria meningitidis serogroup C / serotype 2a (strain ATCC 700532 / DSM 15464 / FAM18).